Here is a 101-residue protein sequence, read N- to C-terminus: Large ribosomal subunit protein bL21 (101 aa).

This sequence belongs to the bacterial ribosomal protein bL21 family. In terms of assembly, part of the 50S ribosomal subunit. Contacts protein L20.

Its function is as follows. This protein binds to 23S rRNA in the presence of protein L20. This Thermus thermophilus (strain ATCC BAA-163 / DSM 7039 / HB27) protein is Large ribosomal subunit protein bL21.